Consider the following 1149-residue polypeptide: MHGTVSRSSSSSNMTDVSSPAGGAASPVEIATSSSTAATTSASASSSKPLTNGANKTAISTAAGVTPGAAPGPGCAAIPASGSSGNQVKLEHHYRQSNNNRPAGSNRSSETKLRSPAGESDGASRLMTPAGSSSSPSQSPSQSQSQSQASIQTQTSQQDRLVKAPSTTASQQDVDEVARLFEEKPEAFEKWLTERAPPEALSRLQEFIENRKPHKRPSVTSDLFQQWMAASPTVQQKSPRSLSNSSASSLPECRRHLMDLDEGELFMELIRDVANELDIDVLCHKILVNVGLLTHADRGSLFLAKGTPTNKYLVAKLFDVTQKTALKDAVTRASAEEIIIPFGIGIAGMVAQTKQMINIKEAYKDARFNCEIDLKTGYKTNAILCMPICNYEGDIIGVAQIINKTNGCMEFDEHDVEIFRRYLTFCGIGIQNAQLFEMSVQEYRRNQILLNLARSIFEEQNNLECLVTKIMTEARELLKCERCSVFLVDLDCCEASHLEKIIEKPNQPATRAIKSADSFEEKKMRNRFTVLFELGGEYQAANVSRPSVSELSSSTLAQIAQFVATTGQTVNICDVIEWVRDHNQIRAEDEIDSTQAILCMPIMNAQKKVIGVAQLINKANGVPFTESDASIFEAFAIFCGLGIHNTQMYENACKLMAKQKVALECLSYHATASQDQTEKLTQDAIAEAESYNLYSFTFTDFELVDDDTCRAVLRMFMQCNLVSQFQIPYDVLCRWVLSVRKNYRPVKYHNWRHALNVAQTMFAMLKTGKMERFMTDLEILGLLVACLCHDLDHRGTNNAFQTKTESPLAILYTTSTMEHHHFDQCVMILNSEGNNIFQALSPEDYRSVMKTVESAILSTDLAMYFKKRNAFLELVENGEFDWQGEEKKDLLCGMMMTACDVSAIAKPWEVQHKVAKLVADEFFDQGDLEKLQLNTQPVAMMDRERKDELPKMQVGFIDVICLPLYRVLCDTFPWITPLYEGTLENRRNWQDLAEKVEMGLTWIDHDTIDKPVEEFAACADEEIKDIEFTVTTLNCNQQSQHGSEDSHTPEHQRSGSRLSMKKTGALGKAVRSKLSKTLYNSMDGSKPKTSLKLLESHVSEDMDDKSPTSPSQPQASGSMGRMSASSSTSSAGGQMVDKSKKRSKLCALL.

Composition is skewed to low complexity over residues 1-19 (MHGT…DVSS) and 31-47 (ATSS…ASSS). The tract at residues 1 to 175 (MHGTVSRSSS…STTASQQDVD (175 aa)) is disordered. Positions 48–59 (KPLTNGANKTAI) are enriched in polar residues. Residues 60-85 (STAAGVTPGAAPGPGCAAIPASGSSG) are compositionally biased toward low complexity. Polar residues predominate over residues 96–108 (QSNNNRPAGSNRS). The segment covering 132–158 (SSSSPSQSPSQSQSQSQASIQTQTSQQ) has biased composition (low complexity). GAF domains are found at residues 278–430 (DIDV…GIGI) and 462–643 (NLEC…GLGI). The PDEase domain occupies 673–996 (SQDQTEKLTQ…RNWQDLAEKV (324 aa)). The active-site Proton donor is histidine 749. Residues histidine 753, histidine 789, aspartate 790, and aspartate 900 each coordinate a divalent metal cation. Disordered stretches follow at residues 1037 to 1066 (QQSQ…TGAL) and 1096 to 1149 (SHVS…CALL). Basic and acidic residues-rich tracts occupy residues 1042 to 1053 (GSEDSHTPEHQR) and 1096 to 1106 (SHVSEDMDDKS). Residues 1115–1135 (ASGSMGRMSASSSTSSAGGQM) show a composition bias toward low complexity. The span at 1139–1149 (SKKRSKLCALL) shows a compositional bias: basic residues. Cysteine 1146 carries the cysteine methyl ester modification. Cysteine 1146 carries the S-farnesyl cysteine lipid modification. Positions 1147 to 1149 (ALL) are cleaved as a propeptide — removed in mature form.

It belongs to the cyclic nucleotide phosphodiesterase family. Interacts with PrBP. A divalent metal cation is required as a cofactor.

It localises to the cell membrane. The enzyme catalyses 3',5'-cyclic GMP + H2O = GMP + H(+). Has a role regulating cGMP transport in Malpighian tubule principal cells. This chain is cGMP-specific 3',5'-cyclic phosphodiesterase, found in Drosophila yakuba (Fruit fly).